The primary structure comprises 729 residues: Glycine--tRNA ligase (729 aa).

The N-terminal 33 residues, 1 to 33 (MPCLLPSLLRATRAALPLLSPPRVVAASASQRL), are a transit peptide targeting the mitochondrion. A WHEP-TRS domain is found at 53-109 (LLAPLRLAVRQQGDFVRKLKEDKAPQVDVDRAVAELKARKRVLEAKELALQPKDDIV). Lys194 bears the N6-acetyllysine mark. Residue Glu289 participates in glycine binding. ATP contacts are provided by residues 321–323 (RNE) and 332–333 (RV). Glu340 serves as a coordination point for glycine. Tyr443 is subject to Phosphotyrosine. 447-448 (EI) provides a ligand contact to ATP. At Lys491 the chain carries N6-acetyllysine. 566-568 (EPS) lines the glycine pocket. Arg573 is an ATP binding site. Ser690 carries the phosphoserine modification. The residue at position 726 (Thr726) is a Phosphothreonine.

It belongs to the class-II aminoacyl-tRNA synthetase family. In terms of assembly, homodimer.

The protein resides in the cytoplasm. It is found in the mitochondrion. The protein localises to the cell projection. It localises to the axon. Its subcellular location is the secreted. The protein resides in the extracellular exosome. The enzyme catalyses tRNA(Gly) + glycine + ATP = glycyl-tRNA(Gly) + AMP + diphosphate. It carries out the reaction 2 ATP + H(+) = P(1),P(4)-bis(5'-adenosyl) tetraphosphate + diphosphate. Catalyzes the ATP-dependent ligation of glycine to the 3'-end of its cognate tRNA, via the formation of an aminoacyl-adenylate intermediate (Gly-AMP). Also produces diadenosine tetraphosphate (Ap4A), a universal pleiotropic signaling molecule needed for cell regulation pathways, by direct condensation of 2 ATPs. Thereby, may play a special role in Ap4A homeostasis. In Mus musculus (Mouse), this protein is Glycine--tRNA ligase (Gars1).